The primary structure comprises 393 residues: NAD(P)H-quinone oxidoreductase subunit H, chloroplastic (393 aa).

Belongs to the complex I 49 kDa subunit family. In terms of assembly, NDH is composed of at least 16 different subunits, 5 of which are encoded in the nucleus.

It localises to the plastid. The protein resides in the chloroplast thylakoid membrane. It catalyses the reaction a plastoquinone + NADH + (n+1) H(+)(in) = a plastoquinol + NAD(+) + n H(+)(out). It carries out the reaction a plastoquinone + NADPH + (n+1) H(+)(in) = a plastoquinol + NADP(+) + n H(+)(out). NDH shuttles electrons from NAD(P)H:plastoquinone, via FMN and iron-sulfur (Fe-S) centers, to quinones in the photosynthetic chain and possibly in a chloroplast respiratory chain. The immediate electron acceptor for the enzyme in this species is believed to be plastoquinone. Couples the redox reaction to proton translocation, and thus conserves the redox energy in a proton gradient. In Pelargonium hortorum (Common geranium), this protein is NAD(P)H-quinone oxidoreductase subunit H, chloroplastic.